The primary structure comprises 407 residues: RING finger protein 44 (407 aa).

Residues 26-58 (LSSSPGQLWGRPSNLSVEEHRASAPAGRSPRML) are disordered. Residues 355–396 (CVVCFSDFEVRQLLRVLPCNHEFHAKCVDKWLKANRTCPICR) form an RING-type; atypical zinc finger.

The protein is RING finger protein 44 (Rnf44) of Mus musculus (Mouse).